The sequence spans 267 residues: Actin maturation protease (267 aa).

The tract at residues 1–32 is disordered; sequence MSNISSVAPPPPPPPMIVTPSTPATTKERPVG. Residues 8 to 17 are compositionally biased toward pro residues; sequence APPPPPPPMI. The peptidase C39-like stretch occupies residues 74 to 188; it reads SIVQVGPTCG…WALIVGYLVD (115 aa). Cysteine 82 is an active-site residue.

Belongs to the ACTMAP family.

It catalyses the reaction N-terminal N(alpha)-acetyl-L-cysteinyl-L-aspartyl-[protein] + H2O = N-terminal L-aspartyl-[protein] + N-acetyl-L-cysteine. Actin maturation protease that specifically mediates the cleavage of immature acetylated N-terminal actin, thereby contributing to actin maturation. The polypeptide is Actin maturation protease (Drosophila melanogaster (Fruit fly)).